Here is a 495-residue protein sequence, read N- to C-terminus: MPTPNTASPQAKGFRRAVSELDAKQAEAIMSPRFIGRRQSLIEDARKEREKAEAASAASSEPGDLLEAAVSKEKDGKAMLNLLFTLRGAKTSSLSRAVKAFETFEAQIHHLETRPVQRPRAGGPHLEYFVRCEVPSADLPALLSSVRRVAEDVRGAGENKVLWFPRKVSELDKCHHLVTKFDPDLDLDHPGFSDQVYRQRRKLIAEIAFQYKHGDPIPRVEYTAEEIATWKEVYTTLKSLYVTHACREHLEAFQLLERFSGYREDSIPQLEDVSRFLKERTGFQLRPVAGLLSARDFLASLAFRVFQCTQYIRHASSPMHSPEPDCCHELLGHVPMLADRTFAQFSQDIGLASLGASDEEIEKLSTLYWFTVEFGLCKQNGEVKAYGAGLLSSYGELLHSLSEEPEIRAFDPDAAAVQPYQDQTYQSVYFVSESFSDAKDKLRNYASRIQRPFSVKFDPYTLAIDVLDSPHAIRRSLEGVQDELHTLAHALSAIG.

A Phosphoserine; by CaMK2 modification is found at Ser19. Ser31 carries the phosphoserine modification. The residue at position 40 (Ser40) is a Phosphoserine; by CaMK2 and PKA. Basic and acidic residues predominate over residues 41 to 53 (LIEDARKEREKAE). Positions 41-65 (LIEDARKEREKAEAASAASSEPGDL) are disordered. Residues His328, His333, and Glu373 each coordinate Fe cation. Ser469 carries the post-translational modification Phosphoserine.

Belongs to the biopterin-dependent aromatic amino acid hydroxylase family. Homotetramer. Interacts (when phosphorylated at Ser-19) with YWHAG; one YWHAG dimer bounds to one TH tetramer this interaction may influence the phosphorylation and dephosphorylation of other sites. The cofactor is Fe(2+). Post-translationally, phosphorylated on Ser-19, Ser-31 and Ser-40 by several protein kinases with different site specificities. Phosphorylation at Ser-31 and Ser-40 leads to an increase of TH activity. Phosphorylation at Ser-40 activates the enzyme and also counteracts the feedback inhibition of TH by catecholamines. Phosphorylation of Ser-19 and Ser-31 triggers the proteasomal degradation of TH through the ubiquitin-proteasome pathway. Phosphorylation at Ser-31 facilitates transport of TH from the soma to the nerve terminals via the microtubule network. Phosphorylation at Ser-19 induces the high-affinity binding to the 14-3-3 protein YWHAG; this interaction may influence the phosphorylation and dephosphorylation of other sites. Ser-19 increases the phosphorylation at Ser-40 in a hierarchical manner, leading to increased activity.

The protein localises to the cytoplasm. The protein resides in the perinuclear region. Its subcellular location is the nucleus. It is found in the cell projection. It localises to the axon. The protein localises to the cytoplasmic vesicle. The protein resides in the secretory vesicle. Its subcellular location is the synaptic vesicle. The enzyme catalyses (6R)-L-erythro-5,6,7,8-tetrahydrobiopterin + L-tyrosine + O2 = (4aS,6R)-4a-hydroxy-L-erythro-5,6,7,8-tetrahydrobiopterin + L-dopa. It functions in the pathway catecholamine biosynthesis; dopamine biosynthesis; dopamine from L-tyrosine: step 1/2. With respect to regulation, inhibited in feedback fashion by the catecholamine neurotransmitters, especially by dopamine in competition with tetrahydrobiopterin. Phosphorylation of several Ser/Thr residues in the N-terminus regulates the catalytic activity. Ser-31 and Ser-40 are readily phosphorylated to activate the catalytic activity. A Cysteine modification induced by N-ethylmaleimide (NEM), inhibits tyrosine 3-monooxygenase activity through the modification of the Cys-174. Its function is as follows. Catalyzes the conversion of L-tyrosine to L-dihydroxyphenylalanine (L-Dopa), the rate-limiting step in the biosynthesis of cathecolamines, dopamine, noradrenaline, and adrenaline. Uses tetrahydrobiopterin and molecular oxygen to convert tyrosine to L-Dopa. In addition to tyrosine, is able to catalyze the hydroxylation of phenylalanine and tryptophan with lower specificity. Positively regulates the regression of retinal hyaloid vessels during postnatal development. In Canis lupus familiaris (Dog), this protein is Tyrosine 3-monooxygenase (TH).